Here is a 342-residue protein sequence, read N- to C-terminus: Glutamyl endopeptidase (342 aa).

Residues 1–29 (MKGKFLKVSSLFVATLTTATLVSSPAANA) form the signal peptide. A propeptide spanning residues 30–68 (LSSKAMDNHPQQTQSSKQQTPKIKKGGNLKPLEQREHAN) is cleaved from the precursor. The disordered stretch occupies residues 33–63 (KAMDNHPQQTQSSKQQTPKIKKGGNLKPLEQ). Positions 39–50 (PQQTQSSKQQTP) are enriched in low complexity. Active-site charge relay system residues include histidine 119, aspartate 161, and serine 237. A disordered region spans residues 283–342 (FANDDQPNNPDNPDNPNNPDNPNNPDNPNNPDEPNNPDNPNNPDNPDNGDNNNSDNPDAA). Positions 286 to 342 (DDQPNNPDNPDNPNNPDNPNNPDNPNNPDEPNNPDNPNNPDNPDNGDNNNSDNPDAA) are enriched in low complexity. Repeat copies occupy residues 289–291 (PNN), 292–294 (PDN), 295–297 (PDN), 298–300 (PNN), 301–303 (PDN), 304–306 (PNN), 307–309 (PDN), 310–312 (PNN), 316–318 (PNN), 319–321 (PDN), 322–324 (PNN), 325–327 (PDN), and 328–330 (PDN). Residues 289 to 330 (PNNPDNPDNPNNPDNPNNPDNPNNPDEPNNPDNPNNPDNPDN) form a 13 X 3 AA repeats of P-[DN]-N region.

Belongs to the peptidase S1B family. Post-translationally, proteolytically cleaved by aureolysin (aur). This cleavage leads to the activation of SspA.

The protein resides in the secreted. The catalysed reaction is Preferential cleavage: Glu-|-Xaa, Asp-|-Xaa.. Preferentially cleaves peptide bonds on the carboxyl-terminal side of aspartate and glutamate. Along with other extracellular proteases it is involved in colonization and infection of human tissues. Required for proteolytic maturation of thiol protease SspB and inactivation of SspC, an inhibitor of SspB. It is the most important protease for degradation of fibronectin-binding protein (FnBP) and surface protein A, which are involved in adherence to host cells. May also protect bacteria against host defense mechanism by cleaving the immunoglobulin classes IgG, IgA and IgM. May be involved in the stability of secreted lipases. In Staphylococcus aureus (strain Mu50 / ATCC 700699), this protein is Glutamyl endopeptidase (sspA).